Here is a 1023-residue protein sequence, read N- to C-terminus: MTENNYGIRDIKNQHLKYSYKKYTDLIIGFEKHAKRMYDDWVIDINNRNIIMHKLDNLVRSMIKIYNECIMEIYNKTPNENESDNISNTNKKINNAIYNKIYNEINKIERIENKNNKLVDSFNSIREQLIELAKNNGFHTINDFIGLYVGENYESLFNNLDMETFELYKGVFVPLSISINKIKKKYRDTDKQDTITISKIPSKCDGLIENTCTVTITMNNIFTEIIFEGYVSADILNAYLRTSQIYSKHLFNVKNESKRIVKESYPHVDEYFIAKYAKLINSNVYFINNPDEMATKIDSDYMLFTDLTAKNFNTIVKEFVNSNLPTMFSYINVLLMGSNQDVNNAGLLFNLLKDRKIGSETLSDIIYHNLSFHLQIKLKKIINSIKNELGKIRSLTPEEIPIEKKLASMVNMPENVKNYIIEKNNEIKTGENNYKLQMAINGLMQFPWKPKDFNNNNYFQIKNSVTKSRNYLQNVAKKLNETVFGHENSKKVLIELVGKWIQNPESSGQVIGLVGPPGVGKTLLAKGISAALGIPLSIVGLGGMSDSADLIGHSFTYAGAQYGMIVRQMIKAGNWRSVMFFDEVDKVSKRNDTNEIYNTLIHITDPNMNQNFQDRFYSSAIDFDLSGVLIVFSYNSSEKLDPILLDRIKEIKISPYSLKEKILIAQNHVIKELCSNIGFDRDKINIGDDIVEYIIEKYTMEAGVRELKRKLEQILLKVNIDRFYMRGPFYNLLKKYNPETQSDDNSHSLEENQINMYVDYKPSLLEKNSDPNIINKIFNLDIDDHIIITKELVHKYLDKPTLTTEEIHKTNMIGVINGLYATSVGMGGIVPIQIYKNFVGDKNDGSNLKLKITGNQKQVMRESVMCALTTAVNVLNNSIKSKILDKFPHGFHVHAPDGGTPKDGPSAGCAFTTAFVSAILGKKINRHVAMTGEIELTGKISKIGGLMLTTGAKKAGIKCVYICEDNKEDYEIIKKKSPELFQDGLEIKIVNHIIEIITDPNVIIDIDVNDFDKDLISEFKKLK.

An ATP-binding site is contributed by 515 to 522; the sequence is GPPGVGKT. The region spanning 810 to 1003 is the Lon proteolytic domain; it reads TNMIGVINGL…IEIITDPNVI (194 aa). The active site involves S906.

The protein belongs to the peptidase S16 family.

The chain is Lon protease homolog from Acanthamoeba polyphaga (Amoeba).